Consider the following 464-residue polypeptide: Glycine--tRNA ligase (464 aa).

Positions 104 and 175 each coordinate substrate. ATP-binding positions include 207–209, 217–222, 292–293, and 336–339; these read RNE, FRTREF, EL, and GVNR. Position 222–226 (222–226) interacts with substrate; it reads FEQME. A substrate-binding site is contributed by 332 to 336; sequence EPALG.

It belongs to the class-II aminoacyl-tRNA synthetase family. Homodimer.

It is found in the cytoplasm. The catalysed reaction is tRNA(Gly) + glycine + ATP = glycyl-tRNA(Gly) + AMP + diphosphate. Functionally, catalyzes the attachment of glycine to tRNA(Gly). The polypeptide is Glycine--tRNA ligase (Leptospira interrogans serogroup Icterohaemorrhagiae serovar copenhageni (strain Fiocruz L1-130)).